Consider the following 343-residue polypeptide: Probable dual-specificity RNA methyltransferase RlmN (343 aa).

Glu92 (proton acceptor) is an active-site residue. One can recognise a Radical SAM core domain in the interval 98–328 (YHHGLTACIS…TTVRREMGAD (231 aa)). A disulfide bridge connects residues Cys105 and Cys333. [4Fe-4S] cluster contacts are provided by Cys112, Cys116, and Cys119. S-adenosyl-L-methionine-binding positions include 159–160 (GE), Ser191, 214–216 (SLH), and Asn290. The active-site S-methylcysteine intermediate is Cys333.

This sequence belongs to the radical SAM superfamily. RlmN family. [4Fe-4S] cluster is required as a cofactor.

It localises to the cytoplasm. It catalyses the reaction adenosine(2503) in 23S rRNA + 2 reduced [2Fe-2S]-[ferredoxin] + 2 S-adenosyl-L-methionine = 2-methyladenosine(2503) in 23S rRNA + 5'-deoxyadenosine + L-methionine + 2 oxidized [2Fe-2S]-[ferredoxin] + S-adenosyl-L-homocysteine. The enzyme catalyses adenosine(37) in tRNA + 2 reduced [2Fe-2S]-[ferredoxin] + 2 S-adenosyl-L-methionine = 2-methyladenosine(37) in tRNA + 5'-deoxyadenosine + L-methionine + 2 oxidized [2Fe-2S]-[ferredoxin] + S-adenosyl-L-homocysteine. Functionally, specifically methylates position 2 of adenine 2503 in 23S rRNA and position 2 of adenine 37 in tRNAs. The chain is Probable dual-specificity RNA methyltransferase RlmN from Alkaliphilus oremlandii (strain OhILAs) (Clostridium oremlandii (strain OhILAs)).